Reading from the N-terminus, the 379-residue chain is 23S rRNA (uracil(747)-C(5))-methyltransferase RlmC (379 aa).

4 residues coordinate [4Fe-4S] cluster: cysteine 3, cysteine 11, cysteine 14, and cysteine 86. 4 residues coordinate S-adenosyl-L-methionine: glutamine 211, phenylalanine 240, glutamate 262, and asparagine 310. The Nucleophile role is filled by cysteine 337.

Belongs to the class I-like SAM-binding methyltransferase superfamily. RNA M5U methyltransferase family. RlmC subfamily.

It catalyses the reaction uridine(747) in 23S rRNA + S-adenosyl-L-methionine = 5-methyluridine(747) in 23S rRNA + S-adenosyl-L-homocysteine + H(+). Catalyzes the formation of 5-methyl-uridine at position 747 (m5U747) in 23S rRNA. The sequence is that of 23S rRNA (uracil(747)-C(5))-methyltransferase RlmC from Halothiobacillus neapolitanus (strain ATCC 23641 / c2) (Thiobacillus neapolitanus).